The following is a 394-amino-acid chain: S-adenosylmethionine synthase (394 aa).

Position 16 (His16) interacts with ATP. Asp18 is a Mg(2+) binding site. K(+) is bound at residue Glu44. L-methionine-binding residues include Glu57 and Gln100. Positions 100–110 are flexible loop; the sequence is QSPDIAQGVDA. ATP-binding positions include 172-174, 239-240, Asp248, 254-255, Ala271, and Lys275; these read DAK, RF, and RK. Asp248 serves as a coordination point for L-methionine. Lys279 provides a ligand contact to L-methionine.

This sequence belongs to the AdoMet synthase family. Homotetramer; dimer of dimers. Requires Mg(2+) as cofactor. The cofactor is K(+).

The protein localises to the cytoplasm. The catalysed reaction is L-methionine + ATP + H2O = S-adenosyl-L-methionine + phosphate + diphosphate. Its pathway is amino-acid biosynthesis; S-adenosyl-L-methionine biosynthesis; S-adenosyl-L-methionine from L-methionine: step 1/1. Functionally, catalyzes the formation of S-adenosylmethionine (AdoMet) from methionine and ATP. The overall synthetic reaction is composed of two sequential steps, AdoMet formation and the subsequent tripolyphosphate hydrolysis which occurs prior to release of AdoMet from the enzyme. This is S-adenosylmethionine synthase from Enterococcus faecalis (strain ATCC 700802 / V583).